The following is a 239-amino-acid chain: 1-(5-phosphoribosyl)-5-[(5-phosphoribosylamino)methylideneamino] imidazole-4-carboxamide isomerase (239 aa).

The active-site Proton acceptor is Asp8. Residue Asp129 is the Proton donor of the active site.

It belongs to the HisA/HisF family.

It is found in the cytoplasm. The catalysed reaction is 1-(5-phospho-beta-D-ribosyl)-5-[(5-phospho-beta-D-ribosylamino)methylideneamino]imidazole-4-carboxamide = 5-[(5-phospho-1-deoxy-D-ribulos-1-ylimino)methylamino]-1-(5-phospho-beta-D-ribosyl)imidazole-4-carboxamide. Its pathway is amino-acid biosynthesis; L-histidine biosynthesis; L-histidine from 5-phospho-alpha-D-ribose 1-diphosphate: step 4/9. This Pelagibacter ubique (strain HTCC1062) protein is 1-(5-phosphoribosyl)-5-[(5-phosphoribosylamino)methylideneamino] imidazole-4-carboxamide isomerase.